The sequence spans 977 residues: DNA-directed RNA polymerase 3B, chloroplastic (977 aa).

A chloroplast-targeting transit peptide spans 1–71 (MASTASYSPS…NNIQSQTTVC (71 aa)). Active-site residues include D678, K753, and D910.

It belongs to the phage and mitochondrial RNA polymerase family.

The protein resides in the plastid. It localises to the chloroplast. It carries out the reaction RNA(n) + a ribonucleoside 5'-triphosphate = RNA(n+1) + diphosphate. In terms of biological role, DNA-dependent RNA polymerase catalyzes the transcription of DNA into RNA using the four ribonucleoside triphosphates as substrates. The chain is DNA-directed RNA polymerase 3B, chloroplastic (RPOT3-TOM) from Nicotiana tabacum (Common tobacco).